The following is a 141-amino-acid chain: Large ribosomal subunit protein uL11 (141 aa).

Belongs to the universal ribosomal protein uL11 family. Part of the ribosomal stalk of the 50S ribosomal subunit. Interacts with L10 and the large rRNA to form the base of the stalk. L10 forms an elongated spine to which L12 dimers bind in a sequential fashion forming a multimeric L10(L12)X complex. One or more lysine residues are methylated.

Functionally, forms part of the ribosomal stalk which helps the ribosome interact with GTP-bound translation factors. The polypeptide is Large ribosomal subunit protein uL11 (Synechocystis sp. (strain ATCC 27184 / PCC 6803 / Kazusa)).